The primary structure comprises 294 residues: Mating type protein mtA-1 (294 aa).

Positions 46 to 101 form a DNA-binding region, alpha box; sequence TAKKKVNGFMGFRSNYSPLFSYLPQKMRSPFMTILWQYDPYHNEWDFMCSVYSSIR.

This sequence belongs to the MATALPHA1 family.

The protein localises to the nucleus. Mating type proteins are sequence specific DNA-binding proteins that act as master switches in fungal differentiation by controlling gene expression in a cell type-specific fashion. Transcriptional activator that induces the transcription of alpha-specific genes. This is Mating type protein mtA-1 (MTA1) from Sordaria equina.